The chain runs to 77 residues: Conotoxin VnMEKL-0111 (77 aa).

The N-terminal stretch at 1–19 is a signal peptide; the sequence is MEKLTILLLVAAVLMSTQA. A propeptide spanning residues 20-46 is cleaved from the precursor; it reads LIQHDGEKSQKAKMKFLTARTLSAKTR. Disulfide bonds link Cys-50–Cys-66, Cys-57–Cys-71, and Cys-65–Cys-75.

This sequence belongs to the conotoxin O2 superfamily. Expressed by the venom duct.

It localises to the secreted. The sequence is that of Conotoxin VnMEKL-0111 from Conus ventricosus (Mediterranean cone).